The primary structure comprises 611 residues: Protein spaetzle 3 (611 aa).

An N-terminal signal peptide occupies residues 1–14 (MALTNFSLPFGALG). A glycan (N-linked (GlcNAc...) asparagine) is linked at Asn5. The interval 57–322 (EYFKNNPYAP…NDKSNNNQMP (266 aa)) is disordered. Low complexity-rich tracts occupy residues 104–120 (QQVQ…QHQQ), 127–153 (SVSF…LTQT), and 169–185 (PGQQ…QQKQ). Over residues 191–210 (GSASATFTKNSGSFSITSFG) the composition is skewed to polar residues. The span at 218–239 (PPQPQQPPPSQQQQPPPAPPPQ) shows a compositional bias: pro residues. Over residues 288-306 (YDVEEGEEDEEEDGEEEGQ) the composition is skewed to acidic residues. Asn335 and Asn351 each carry an N-linked (GlcNAc...) asparagine glycan. A disordered region spans residues 477 to 518 (KKRQAAAGGSRNRGGSAGGSGNGNTNANRQPGNKNGSSGTGR). A compositionally biased stretch (gly residues) spans 487 to 498 (RNRGGSAGGSGN). N-linked (GlcNAc...) asparagine glycosylation is present at Asn511. Positions 521-609 (ACESKIEIVT…LFPSCCVCRC (89 aa)) constitute a Spaetzle domain. 3 cysteine pairs are disulfide-bonded: Cys522/Cys573, Cys559/Cys605, and Cys567/Cys607.

In terms of assembly, homodimer; disulfide-linked.

Functionally, neurotrophin which may function as a ligand to the Toll-related receptor Tollo. Involved in a Tollo and JNK signaling pathway that positively regulates neuromuscular junction (NMJ) growth in presynaptic motorneurons. May function by activating Tollo to promote the phosphorylation of JNK. The sequence is that of Protein spaetzle 3 from Drosophila melanogaster (Fruit fly).